Reading from the N-terminus, the 129-residue chain is Small ribosomal subunit protein bS6 (129 aa).

The segment at 100 to 129 (SIMLKQKEERAPRREERSEAKPEAKSEAAE) is disordered. Basic and acidic residues predominate over residues 104–129 (KQKEERAPRREERSEAKPEAKSEAAE).

This sequence belongs to the bacterial ribosomal protein bS6 family.

Functionally, binds together with bS18 to 16S ribosomal RNA. In Vibrio parahaemolyticus serotype O3:K6 (strain RIMD 2210633), this protein is Small ribosomal subunit protein bS6.